Here is a 186-residue protein sequence, read N- to C-terminus: Adenylate kinase (186 aa).

10-15 (GSGKGT) contributes to the ATP binding site. Positions 30–55 (ATGDVFRERMKTDMALRDIVSSGGYV) are NMP. Residues T31, R36, 53–55 (GYV), 81–84 (GYPR), and Q88 contribute to the AMP site. Residues 122 to 132 (ARSKESGRTDD) form an LID region. R123 contacts ATP. AMP contacts are provided by R129 and R140. K168 is a binding site for ATP.

The protein belongs to the adenylate kinase family. As to quaternary structure, monomer.

Its subcellular location is the cytoplasm. It catalyses the reaction AMP + ATP = 2 ADP. Its pathway is purine metabolism; AMP biosynthesis via salvage pathway; AMP from ADP: step 1/1. Its function is as follows. Catalyzes the reversible transfer of the terminal phosphate group between ATP and AMP. Plays an important role in cellular energy homeostasis and in adenine nucleotide metabolism. The sequence is that of Adenylate kinase from Tropheryma whipplei (strain TW08/27) (Whipple's bacillus).